Consider the following 45-residue polypeptide: Protamine Z2 (45 aa).

The span at 1–23 (MKCGRKRRRRRRHACKRKKRACK) shows a compositional bias: basic residues. The interval 1-26 (MKCGRKRRRRRRHACKRKKRACKQRS) is disordered.

In terms of tissue distribution, testis.

It is found in the nucleus. The protein resides in the chromosome. Its function is as follows. Protamines substitute for histones in the chromatin of sperm during the haploid phase of spermatogenesis. They compact sperm DNA into a highly condensed, stable and inactive complex. The chain is Protamine Z2 from Scyliorhinus canicula (Small-spotted catshark).